A 402-amino-acid polypeptide reads, in one-letter code: Serine--glyoxylate aminotransferase (402 aa).

K201 carries the post-translational modification N6-(pyridoxal phosphate)lysine.

It belongs to the class-V pyridoxal-phosphate-dependent aminotransferase family. Pyridoxal 5'-phosphate is required as a cofactor.

The enzyme catalyses glyoxylate + L-serine = 3-hydroxypyruvate + glycine. It functions in the pathway one-carbon metabolism; formaldehyde assimilation via serine pathway. This chain is Serine--glyoxylate aminotransferase, found in Methylorubrum extorquens (strain ATCC 14718 / DSM 1338 / JCM 2805 / NCIMB 9133 / AM1) (Methylobacterium extorquens).